Here is a 354-residue protein sequence, read N- to C-terminus: Arginase-2, mitochondrial (354 aa).

The N-terminal 22 residues, methionine 1 to serine 22, are a transit peptide targeting the mitochondrion. Histidine 120, aspartate 143, histidine 145, and aspartate 147 together coordinate Mn(2+). Residues histidine 145–asparagine 149, serine 156–asparagine 158, and aspartate 202 contribute to the substrate site. Residues aspartate 251 and aspartate 253 each coordinate Mn(2+). Substrate is bound by residues threonine 265 and glutamate 296. A disordered region spans residues tyrosine 334–isoleucine 354.

The protein belongs to the arginase family. In terms of assembly, homotrimer. Requires Mn(2+) as cofactor. Expressed most strongly in kidney and prostate, much less strongly in the brain, skeletal muscle, placenta, lung, mammary gland, macrophage, uterus, testis and gut, but apparently not in the liver, heart and pancreas. Expressed in activated T cells.

Its subcellular location is the mitochondrion. It catalyses the reaction L-arginine + H2O = urea + L-ornithine. It participates in nitrogen metabolism; urea cycle; L-ornithine and urea from L-arginine: step 1/1. In terms of biological role, may play a role in the regulation of extra-urea cycle arginine metabolism and also in down-regulation of nitric oxide synthesis. Extrahepatic arginase functions to regulate L-arginine bioavailability to nitric oxid synthase (NOS). Arginine metabolism is a critical regulator of innate and adaptive immune responses. Seems to be involved in negative regulation of the survival capacity of activated CD4(+) and CD8(+) T cells. May suppress inflammation-related signaling in asthmatic airway epithelium. May contribute to the immune evasion of H.pylori by restricting M1 macrophage activation and polyamine metabolism. In fetal dendritic cells may play a role in promoting immune suppression and T cell TNF-alpha production during gestation. Regulates RPS6KB1 signaling, which promotes endothelial cell senescence and inflammation and implicates NOS3/eNOS dysfunction. Can inhibit endothelial autophagy independently of its enzymatic activity implicating mTORC2 signaling. Involved in vascular smooth muscle cell senescence and apoptosis independently of its enzymatic activity. Since NOS is found in the penile corpus cavernosum smooth muscle, the clitoral corpus cavernosum and the vagina, arginase-2 plays a role in both male and female sexual arousal. This chain is Arginase-2, mitochondrial (ARG2), found in Homo sapiens (Human).